Consider the following 729-residue polypeptide: Fatty acid oxidation complex subunit alpha (729 aa).

The segment at 1–189 is enoyl-CoA hydratase/isomerase; that stretch reads MLYKGDTLYL…KIGLVDGVVA (189 aa). Residue Asp296 participates in substrate binding. The tract at residues 311–729 is 3-hydroxyacyl-CoA dehydrogenase; it reads ETPKHAAVLG…ARPVGALKTA (419 aa). NAD(+)-binding positions include Met324, Asp343, 400-402, Lys407, and Ser429; that span reads VVE. Catalysis depends on His450, which acts as the For 3-hydroxyacyl-CoA dehydrogenase activity. Asn453 is a binding site for NAD(+). Positions 500 and 660 each coordinate substrate.

It in the N-terminal section; belongs to the enoyl-CoA hydratase/isomerase family. In the C-terminal section; belongs to the 3-hydroxyacyl-CoA dehydrogenase family. Heterotetramer of two alpha chains (FadB) and two beta chains (FadA).

The enzyme catalyses a (3S)-3-hydroxyacyl-CoA + NAD(+) = a 3-oxoacyl-CoA + NADH + H(+). It carries out the reaction a (3S)-3-hydroxyacyl-CoA = a (2E)-enoyl-CoA + H2O. The catalysed reaction is a 4-saturated-(3S)-3-hydroxyacyl-CoA = a (3E)-enoyl-CoA + H2O. It catalyses the reaction (3S)-3-hydroxybutanoyl-CoA = (3R)-3-hydroxybutanoyl-CoA. The enzyme catalyses a (3Z)-enoyl-CoA = a 4-saturated (2E)-enoyl-CoA. It carries out the reaction a (3E)-enoyl-CoA = a 4-saturated (2E)-enoyl-CoA. It functions in the pathway lipid metabolism; fatty acid beta-oxidation. Its function is as follows. Involved in the aerobic and anaerobic degradation of long-chain fatty acids via beta-oxidation cycle. Catalyzes the formation of 3-oxoacyl-CoA from enoyl-CoA via L-3-hydroxyacyl-CoA. It can also use D-3-hydroxyacyl-CoA and cis-3-enoyl-CoA as substrate. The polypeptide is Fatty acid oxidation complex subunit alpha (Klebsiella pneumoniae subsp. pneumoniae (strain ATCC 700721 / MGH 78578)).